Reading from the N-terminus, the 530-residue chain is MAAIKAVNSKAEVARARAALAVNICAARGLQDVLRTNLGPKGTMKMLVSGAGDIKLTKDGNVLLDEMQIQHPTASLIAKVATAQDDVTGDGTTSNVLIIGELLKQADLYISEGLHPRIIAEGFEAAKIKALEVLEEVKVTKEMKRKILLDVARTSLQTKVHAELADVLTEVVVDSVLAVRRPGYPIDLFMVEIMEMKHKLGTDTKLIQGLVLDHGARHPDMKKRVEDAFILICNVSLEYEKTEVNSGFFYKTAEEKEKLVKAERKFIEDRVQKIIDLKDKVCAQSNKGFVVINQKGIDPFSLDSLAKHGIVALRRAKRRNMERLSLACGGMAVNSFEDLTVDCLGHAGLVYEYTLGEEKFTFIEECVNPCSVTLLVKGPNKHTLTQVKDAIRDGLRAIKNAIEDGCMVPGAGAIEVAMAEALVTYKNSIKGRARLGVQAFADALLIIPKVLAQNAGYDPQETLVKVQAEHVESKQLVGVDLNTGEPMVAADAGVWDNYCVKKQLLHSCTVIATNILLVDEIMRAGMSSLK.

It belongs to the TCP-1 chaperonin family. As to quaternary structure, component of the chaperonin-containing T-complex (TRiC), a heterooligomeric complex of about 850 to 900 kDa that forms two stacked rings, 12 to 16 nm in diameter. As to expression, testis-specific.

It localises to the cytoplasm. Its function is as follows. Component of the chaperonin-containing T-complex (TRiC), a molecular chaperone complex that assists the folding of proteins upon ATP hydrolysis. This chain is T-complex protein 1 subunit zeta-2 (CCT6B), found in Homo sapiens (Human).